A 382-amino-acid polypeptide reads, in one-letter code: Succinyl-diaminopimelate desuccinylase (382 aa).

H68 is a binding site for Zn(2+). The active site involves D70. D101 provides a ligand contact to Zn(2+). E135 acts as the Proton acceptor in catalysis. Zn(2+)-binding residues include E136, E164, and H350.

Belongs to the peptidase M20A family. DapE subfamily. In terms of assembly, homodimer. Zn(2+) serves as cofactor. Requires Co(2+) as cofactor.

The enzyme catalyses N-succinyl-(2S,6S)-2,6-diaminopimelate + H2O = (2S,6S)-2,6-diaminopimelate + succinate. It participates in amino-acid biosynthesis; L-lysine biosynthesis via DAP pathway; LL-2,6-diaminopimelate from (S)-tetrahydrodipicolinate (succinylase route): step 3/3. In terms of biological role, catalyzes the hydrolysis of N-succinyl-L,L-diaminopimelic acid (SDAP), forming succinate and LL-2,6-diaminopimelate (DAP), an intermediate involved in the bacterial biosynthesis of lysine and meso-diaminopimelic acid, an essential component of bacterial cell walls. The sequence is that of Succinyl-diaminopimelate desuccinylase from Acidithiobacillus ferrooxidans (strain ATCC 23270 / DSM 14882 / CIP 104768 / NCIMB 8455) (Ferrobacillus ferrooxidans (strain ATCC 23270)).